The sequence spans 479 residues: Mitochondria-eating protein (479 aa).

Coiled coils occupy residues 109 to 161 and 187 to 223; these read ERKL…LATT and LRRLDHLNDCEQQIERLRDELSILDAQKSVLQSRIAR. 2 disordered regions span residues 220–251 and 456–479; these read RIARSRSPSPRRIRSRSPSPLPLRSCSPGRAR and RSRSRSQNRSRSVSPLLSHLSRSR. A compositionally biased stretch (low complexity) spans 235–249; sequence RSPSPLPLRSCSPGR.

This sequence belongs to the MIEAP family.

It localises to the cytoplasm. Its subcellular location is the cytosol. The protein resides in the mitochondrion outer membrane. The protein localises to the mitochondrion matrix. Functionally, key regulator of mitochondrial quality that mediates the repairing or degradation of unhealthy mitochondria in response to mitochondrial damage. Mediator of mitochondrial protein catabolic process (also named MALM) by mediating the degradation of damaged proteins inside mitochondria by promoting the accumulation in the mitochondrial matrix of hydrolases that are characteristic of the lysosomal lumen. Also involved in mitochondrion degradation of damaged mitochondria by promoting the formation of vacuole-like structures (named MIV), which engulf and degrade unhealthy mitochondria by accumulating lysosomes. Binds cardiolipin. May form molecular condensates (non-membrane-bounded organelles) within mitochondria that compartmentalize and promote cardiolipin metabolism. The sequence is that of Mitochondria-eating protein (SPATA18) from Gallus gallus (Chicken).